The sequence spans 397 residues: Exodeoxyribonuclease 7 large subunit (397 aa).

Belongs to the XseA family. In terms of assembly, heterooligomer composed of large and small subunits.

It is found in the cytoplasm. It carries out the reaction Exonucleolytic cleavage in either 5'- to 3'- or 3'- to 5'-direction to yield nucleoside 5'-phosphates.. Functionally, bidirectionally degrades single-stranded DNA into large acid-insoluble oligonucleotides, which are then degraded further into small acid-soluble oligonucleotides. This Anaplasma marginale (strain Florida) protein is Exodeoxyribonuclease 7 large subunit.